Consider the following 984-residue polypeptide: uncharacterized protein (984 aa).

This is an uncharacterized protein from Ostreid herpesvirus 1 (isolate France) (OsHV-1).